Consider the following 477-residue polypeptide: Probable glycine dehydrogenase (decarboxylating) subunit 2 (477 aa).

Lysine 264 is subject to N6-(pyridoxal phosphate)lysine.

The protein belongs to the GcvP family. C-terminal subunit subfamily. As to quaternary structure, the glycine cleavage system is composed of four proteins: P, T, L and H. In this organism, the P 'protein' is a heterodimer of two subunits. Pyridoxal 5'-phosphate is required as a cofactor.

The catalysed reaction is N(6)-[(R)-lipoyl]-L-lysyl-[glycine-cleavage complex H protein] + glycine + H(+) = N(6)-[(R)-S(8)-aminomethyldihydrolipoyl]-L-lysyl-[glycine-cleavage complex H protein] + CO2. In terms of biological role, the glycine cleavage system catalyzes the degradation of glycine. The P protein binds the alpha-amino group of glycine through its pyridoxal phosphate cofactor; CO(2) is released and the remaining methylamine moiety is then transferred to the lipoamide cofactor of the H protein. The sequence is that of Probable glycine dehydrogenase (decarboxylating) subunit 2 from Fervidobacterium nodosum (strain ATCC 35602 / DSM 5306 / Rt17-B1).